A 393-amino-acid polypeptide reads, in one-letter code: Demethylspheroidene O-methyltransferase (393 aa).

Positions 1–36 (MPKDDHTGATADRTAQPTGTGKQPLVPGQPGAAPVQ) are disordered. Residues 26–36 (VPGQPGAAPVQ) are compositionally biased toward low complexity. D259 and R297 together coordinate S-adenosyl-L-methionine.

The protein belongs to the class I-like SAM-binding methyltransferase superfamily. Cation-independent O-methyltransferase family.

The enzyme catalyses demethylspheroidene + S-adenosyl-L-methionine = spheroidene + S-adenosyl-L-homocysteine + H(+). It participates in carotenoid biosynthesis; spheroidene biosynthesis. Its function is as follows. Methyltransferase that mediates the O-methylation of 1-hydroxy carotenoids. Converts hydroxyneurosporene to methoxyneurosporene or demethylspheroidene to spheroidene. Also able to produce spirilloxanthin. This Rhodobacter capsulatus (strain ATCC BAA-309 / NBRC 16581 / SB1003) protein is Demethylspheroidene O-methyltransferase (crtF).